The following is a 426-amino-acid chain: 5-methylthioadenosine/S-adenosylhomocysteine deaminase (426 aa).

Positions 60 and 62 each coordinate Zn(2+). Residues Glu89 and His179 each contribute to the substrate site. Position 206 (His206) interacts with Zn(2+). Glu209 and Asp294 together coordinate substrate. Asp294 is a Zn(2+) binding site.

The protein belongs to the metallo-dependent hydrolases superfamily. MTA/SAH deaminase family. Requires Zn(2+) as cofactor.

It carries out the reaction S-adenosyl-L-homocysteine + H2O + H(+) = S-inosyl-L-homocysteine + NH4(+). The catalysed reaction is S-methyl-5'-thioadenosine + H2O + H(+) = S-methyl-5'-thioinosine + NH4(+). Catalyzes the deamination of 5-methylthioadenosine and S-adenosyl-L-homocysteine into 5-methylthioinosine and S-inosyl-L-homocysteine, respectively. Is also able to deaminate adenosine. In Dictyoglomus thermophilum (strain ATCC 35947 / DSM 3960 / H-6-12), this protein is 5-methylthioadenosine/S-adenosylhomocysteine deaminase.